The chain runs to 1174 residues: Protein kinase C-like (1174 aa).

Residues 1–68 form the REM-1 1 domain; it reads MANVEETVAN…LRDLDLQRTT (68 aa). Polar residues predominate over residues 69 to 84; that stretch reads SGVDNMSLQPGRSPTN. Residues 69–140 are disordered; it reads SGVDNMSLQP…PPPATANKRP (72 aa). The segment covering 96-123 has biased composition (low complexity); sequence GYAQQDQGGYGGPQSQYSQLSGGEALQP. The segment covering 124 to 134 has biased composition (pro residues); sequence PRAPFAAPPPA. The REM-1 2 domain maps to 149–226; that stretch reads KYDTPHLGPR…LKRYEDLHVD (78 aa). One can recognise a C2 domain in the interval 229 to 349; it reads GDGDDNDSLD…MRRKKLETEL (121 aa). The segment at 358-406 is disordered; that stretch reads DKMGGHTGIQPDMQFQPPPGQSPAGGPGGGPTPAGVRPPGAPQPQTGPI. Residues 380–389 show a composition bias toward gly residues; the sequence is PAGGPGGGPT. 2 consecutive Phorbol-ester/DAG-type zinc fingers follow at residues 458–506 and 526–576; these read GHKF…VTKC and PHRF…PDFC. The segment at 593–842 is disordered; that stretch reads TRRGQSSSGP…PAANTQGTGK (250 aa). Residues 596–611 are compositionally biased toward polar residues; sequence GQSSSGPGMSQRTLRP. A compositionally biased stretch (low complexity) spans 624-636; sequence QSPGQPGQESPTQ. A compositionally biased stretch (pro residues) spans 648 to 657; sequence SPPPGPPRQP. Residues 658 to 709 are compositionally biased toward low complexity; sequence SYPSSATSVDAARASYSTTGTASTGAPTSPTSGSRPPSGPRTQSSVAAAAAA. Polar residues predominate over residues 720–744; the sequence is RSNTDYSPQSGRSSGSGYPTEQRMS. Residues 786-802 are compositionally biased toward pro residues; it reads LPQPPPPQSPPQHPQQP. Positions 808–820 are enriched in polar residues; the sequence is KMPEQQALTQQPP. Positions 849–1108 constitute a Protein kinase domain; that stretch reads FNFLAVLGKG…AQEIMSHAFF (260 aa). Residues 855-863 and Lys878 each bind ATP; that span reads LGKGNFGKV. Asp974 serves as the catalytic Proton acceptor. Residues 1109–1174 enclose the AGC-kinase C-terminal domain; the sequence is RNINWDDIYH…RGFSYSADFA (66 aa).

It belongs to the protein kinase superfamily. AGC Ser/Thr protein kinase family. PKC subfamily.

It catalyses the reaction L-seryl-[protein] + ATP = O-phospho-L-seryl-[protein] + ADP + H(+). The catalysed reaction is L-threonyl-[protein] + ATP = O-phospho-L-threonyl-[protein] + ADP + H(+). The sequence is that of Protein kinase C-like (PKC1) from Cochliobolus heterostrophus (Southern corn leaf blight fungus).